Reading from the N-terminus, the 411-residue chain is Probable UDP-arabinose 4-epimerase 3 (411 aa).

A compositionally biased stretch (polar residues) spans 1–13; sequence MLSFSRARSQGRN. Residues 1–22 are disordered; it reads MLSFSRARSQGRNTRPLGGGME. Over 1–31 the chain is Cytoplasmic; the sequence is MLSFSRARSQGRNTRPLGGGMEYLEPKRKSN. Residues 32–50 traverse the membrane as a helical; Signal-anchor for type II membrane protein segment; it reads VMGKIILVVSLTALCIFML. Residues 51-411 lie on the Lumenal side of the membrane; the sequence is KHAPSFTSPT…KTHPHGYASS (361 aa). 71 to 102 contributes to the NAD(+) binding site; the sequence is HVLVTGGAGYIGSHAALRLLKDSYRVTIVDNL. Residue Tyr219 is the Proton acceptor of the active site.

It belongs to the NAD(P)-dependent epimerase/dehydratase family. NAD(+) is required as a cofactor.

It is found in the golgi apparatus. Its subcellular location is the golgi stack membrane. The enzyme catalyses UDP-beta-L-arabinopyranose = UDP-alpha-D-xylose. Its pathway is nucleotide-sugar biosynthesis; UDP-L-arabinose biosynthesis; UDP-L-arabinose from UDP-alpha-D-xylose: step 1/1. It functions in the pathway cell wall biogenesis; cell wall polysaccharide biosynthesis. The chain is Probable UDP-arabinose 4-epimerase 3 from Arabidopsis thaliana (Mouse-ear cress).